The primary structure comprises 448 residues: Probable glycine dehydrogenase (decarboxylating) subunit 1 (448 aa).

This sequence belongs to the GcvP family. N-terminal subunit subfamily. The glycine cleavage system is composed of four proteins: P, T, L and H. In this organism, the P 'protein' is a heterodimer of two subunits.

The catalysed reaction is N(6)-[(R)-lipoyl]-L-lysyl-[glycine-cleavage complex H protein] + glycine + H(+) = N(6)-[(R)-S(8)-aminomethyldihydrolipoyl]-L-lysyl-[glycine-cleavage complex H protein] + CO2. Functionally, the glycine cleavage system catalyzes the degradation of glycine. The P protein binds the alpha-amino group of glycine through its pyridoxal phosphate cofactor; CO(2) is released and the remaining methylamine moiety is then transferred to the lipoamide cofactor of the H protein. This Listeria monocytogenes serotype 4a (strain HCC23) protein is Probable glycine dehydrogenase (decarboxylating) subunit 1.